A 250-amino-acid polypeptide reads, in one-letter code: Bcl-2-like protein 12 (250 aa).

Residues 24–46 form a disordered region; that stretch reads GEAAGSPVPTPPRSPAQEEPTDF. Serine 29 carries the phosphoserine modification. Position 33 is a phosphothreonine (threonine 33). Phosphoserine is present on serine 37. An Omega-N-methylarginine modification is found at arginine 60. Residues serine 111, serine 158, serine 159, serine 161, and serine 189 each carry the phosphoserine modification. A BH2 motif is present at residues 227–238; that stretch reads WIQAHGGWEGIL.

The protein belongs to the Bcl-2 family. In terms of tissue distribution, expressed mainly in breast, thymus, prostate, fetal liver, colon, placenta, pancreas, small intestine, spinal cord, kidney, and bone marrow and to a lesser extent in many other tissues. Isoform 2 is primarily expressed in skeletal muscle.

The protein is Bcl-2-like protein 12 of Homo sapiens (Human).